The sequence spans 82 residues: MNELRCGCPDCHCKVDPERVFNHDGEAYCSQACAEQHPNGEPCPAPDCHCERSGKVGGRDITNNQLDEALEETFPASDPISP.

Cd(2+) is bound by residues Cys6, Cys8, Cys11, Cys13, Cys29, Cys33, His37, Cys43, Cys48, and Cys50. Positions 6, 8, and 11 each coordinate Zn(2+). 6 residues coordinate Zn(2+): Cys29, Cys33, His37, Cys43, Cys48, and Cys50. Residues 61 to 82 (ITNNQLDEALEETFPASDPISP) are disordered.

It belongs to the metallothionein superfamily.

Its function is as follows. Metallothioneins are small proteins that have a high content of cysteine residues which allow them to bind heavy metal ions through clusters of thiolate bonds. Preferentially, binds four Cd(2+) ions. Also binds three Zn(2+) ions but with less affinity. Required for long-term viability. May play a role in the storage or sequestration of metals when present in excess. This is Metallothionein from Pseudomonas fluorescens (strain Q2-87).